The chain runs to 141 residues: ATP synthase epsilon chain (141 aa).

It belongs to the ATPase epsilon chain family. As to quaternary structure, F-type ATPases have 2 components, CF(1) - the catalytic core - and CF(0) - the membrane proton channel. CF(1) has five subunits: alpha(3), beta(3), gamma(1), delta(1), epsilon(1). CF(0) has three main subunits: a, b and c.

It localises to the cell inner membrane. In terms of biological role, produces ATP from ADP in the presence of a proton gradient across the membrane. The chain is ATP synthase epsilon chain from Gluconacetobacter diazotrophicus (strain ATCC 49037 / DSM 5601 / CCUG 37298 / CIP 103539 / LMG 7603 / PAl5).